We begin with the raw amino-acid sequence, 130 residues long: Small ribosomal subunit protein uS9 (130 aa).

The tract at residues 109–130 is disordered; it reads RAKERKKYGLYGARRSPQFTKR.

This sequence belongs to the universal ribosomal protein uS9 family.

This Malacoplasma penetrans (strain HF-2) (Mycoplasma penetrans) protein is Small ribosomal subunit protein uS9.